The primary structure comprises 448 residues: Glutamyl-tRNA reductase (448 aa).

Substrate is bound by residues 49 to 52 (TCNR), Ser109, 114 to 116 (ETQ), and Gln120. Cys50 acts as the Nucleophile in catalysis. An NADP(+)-binding site is contributed by 189 to 194 (GAGEMS).

It belongs to the glutamyl-tRNA reductase family. As to quaternary structure, homodimer.

The enzyme catalyses (S)-4-amino-5-oxopentanoate + tRNA(Glu) + NADP(+) = L-glutamyl-tRNA(Glu) + NADPH + H(+). Its pathway is porphyrin-containing compound metabolism; protoporphyrin-IX biosynthesis; 5-aminolevulinate from L-glutamyl-tRNA(Glu): step 1/2. Functionally, catalyzes the NADPH-dependent reduction of glutamyl-tRNA(Glu) to glutamate 1-semialdehyde (GSA). The sequence is that of Glutamyl-tRNA reductase from Staphylococcus aureus (strain bovine RF122 / ET3-1).